Reading from the N-terminus, the 898-residue chain is Phosphoenolpyruvate carboxylase (898 aa).

Catalysis depends on residues His138 and Lys561.

The protein belongs to the PEPCase type 1 family. The cofactor is Mg(2+).

It catalyses the reaction oxaloacetate + phosphate = phosphoenolpyruvate + hydrogencarbonate. In terms of biological role, forms oxaloacetate, a four-carbon dicarboxylic acid source for the tricarboxylic acid cycle. The sequence is that of Phosphoenolpyruvate carboxylase from Streptococcus pneumoniae serotype 2 (strain D39 / NCTC 7466).